We begin with the raw amino-acid sequence, 692 residues long: Ino eighty subunit 1 (692 aa).

Over residues 1 to 25 the composition is skewed to basic and acidic residues; the sequence is MGKRVYDPIHDTFQLREDNSDETKA. Residues 1 to 133 form a disordered region; the sequence is MGKRVYDPIH…RHLKKPDGEP (133 aa). Ser-27 is subject to Phosphoserine. Residues 28 to 56 are compositionally biased toward polar residues; the sequence is PMQSVKSGSQEEASPSSIQSETETVTTKS. Residues 64-80 show a composition bias toward acidic residues; the sequence is EIDDKNDDDSTQSEEEN. Residues 97 to 109 show a composition bias toward polar residues; the sequence is GASTATGPVTTNT. Residues 340–385 are a coiled coil; sequence SKYVEVESKAQEQDMVDEQNEVKETEAENEKQESKAAYATTLFDIL. Residues 465–485 show a composition bias toward basic and acidic residues; it reads FMSKMEEGRKRERTNVTEVKK. The tract at residues 465–550 is disordered; it reads FMSKMEEGRK…VTPAAPTETE (86 aa). A phosphoserine mark is found at Ser-487, Ser-493, and Ser-504. Acidic residues predominate over residues 493–504; that stretch reads SEEDGEGEDDKS. Thr-507 is subject to Phosphothreonine. Over residues 513-528 the composition is skewed to polar residues; sequence SLLTPTPILESSSPMT.

In terms of assembly, component of the chromatin-remodeling INO80 complex, at least composed of ARP4, ARP5, ARP8, RVB1, RVB2, TAF14, NHP10, IES1, IES3, IES4, IES6, ACT1, IES2, IES5 and INO80.

The protein localises to the nucleus. Its function is as follows. Probably involved in transcription regulation via its interaction with the INO80 complex, a chromatin-remodeling complex. This is Ino eighty subunit 1 (IES1) from Saccharomyces cerevisiae (strain ATCC 204508 / S288c) (Baker's yeast).